The sequence spans 1030 residues: Putative pentatricopeptide repeat-containing protein At5g06400, mitochondrial (1030 aa).

The transit peptide at 1–77 (MKALFRFKSC…VKLDETTRLR (77 aa)) directs the protein to the mitochondrion. PPR repeat units follow at residues 188-222 (RVGI…GCDK), 223-257 (DIRT…GFEL), 258-292 (DATA…GITF), 293-323 (GLRT…MVRI), 328-362 (EHDA…EMCL), 363-393 (DAKY…MKRR), 397-431 (DSNV…GRPP), 432-466 (RVST…GIEP), 467-501 (DSVA…GIKP), 502-536 (TWKS…KIVI), 677-711 (NSEA…GCLI), 712-746 (TQDT…GLIP), 747-783 (SSST…GFVP), 784-814 (DREL…LGKI), 818-852 (VTVA…RSLL), 853-887 (DQYT…GTKP), 888-922 (GVHV…SCEP), 923-957 (SVVT…GTSP), and 958-992 (DFKT…GIAP).

This sequence belongs to the PPR family. P subfamily.

Its subcellular location is the mitochondrion. In Arabidopsis thaliana (Mouse-ear cress), this protein is Putative pentatricopeptide repeat-containing protein At5g06400, mitochondrial.